The primary structure comprises 432 residues: Adenylosuccinate synthetase (432 aa).

GTP is bound by residues 12 to 18 (GDEGKGK) and 40 to 42 (GHT). The Proton acceptor role is filled by D13. Mg(2+)-binding residues include D13 and G40. IMP is bound by residues 13–16 (DEGK), 38–41 (NAGH), T126, R140, Q219, T234, and R300. Residue H41 is the Proton donor of the active site. 296–302 (STTGRPR) is a substrate binding site. GTP is bound by residues R302, 328–330 (KLD), and 410–412 (STG).

It belongs to the adenylosuccinate synthetase family. As to quaternary structure, homodimer. Mg(2+) serves as cofactor.

The protein localises to the cytoplasm. It carries out the reaction IMP + L-aspartate + GTP = N(6)-(1,2-dicarboxyethyl)-AMP + GDP + phosphate + 2 H(+). It functions in the pathway purine metabolism; AMP biosynthesis via de novo pathway; AMP from IMP: step 1/2. Functionally, plays an important role in the de novo pathway of purine nucleotide biosynthesis. Catalyzes the first committed step in the biosynthesis of AMP from IMP. This Aquifex aeolicus (strain VF5) protein is Adenylosuccinate synthetase.